A 550-amino-acid polypeptide reads, in one-letter code: Arginine--tRNA ligase (550 aa).

The 'HIGH' region signature appears at 130–140 (ANPTGPIHLGG).

This sequence belongs to the class-I aminoacyl-tRNA synthetase family. Monomer.

It is found in the cytoplasm. The catalysed reaction is tRNA(Arg) + L-arginine + ATP = L-arginyl-tRNA(Arg) + AMP + diphosphate. This is Arginine--tRNA ligase from Corynebacterium efficiens (strain DSM 44549 / YS-314 / AJ 12310 / JCM 11189 / NBRC 100395).